Consider the following 125-residue polypeptide: Small ribosomal subunit protein eS8 (125 aa).

Belongs to the eukaryotic ribosomal protein eS8 family. Part of the 30S ribosomal subunit.

This is Small ribosomal subunit protein eS8 from Methanosarcina mazei (strain ATCC BAA-159 / DSM 3647 / Goe1 / Go1 / JCM 11833 / OCM 88) (Methanosarcina frisia).